A 245-amino-acid chain; its full sequence is Probable transcriptional regulatory protein MARTH_orf271 (245 aa).

The protein belongs to the TACO1 family.

It is found in the cytoplasm. The chain is Probable transcriptional regulatory protein MARTH_orf271 from Metamycoplasma arthritidis (strain 158L3-1) (Mycoplasma arthritidis).